We begin with the raw amino-acid sequence, 375 residues long: 23S rRNA (uracil(747)-C(5))-methyltransferase RlmC (375 aa).

Residues C3, C11, C14, and C87 each coordinate [4Fe-4S] cluster. Positions 212, 241, 262, and 307 each coordinate S-adenosyl-L-methionine. The active-site Nucleophile is the C334.

It belongs to the class I-like SAM-binding methyltransferase superfamily. RNA M5U methyltransferase family. RlmC subfamily.

The catalysed reaction is uridine(747) in 23S rRNA + S-adenosyl-L-methionine = 5-methyluridine(747) in 23S rRNA + S-adenosyl-L-homocysteine + H(+). Catalyzes the formation of 5-methyl-uridine at position 747 (m5U747) in 23S rRNA. This Escherichia coli O127:H6 (strain E2348/69 / EPEC) protein is 23S rRNA (uracil(747)-C(5))-methyltransferase RlmC.